The following is a 578-amino-acid chain: Arginine--tRNA ligase (578 aa).

The 'HIGH' region motif lies at 125–135 (PNVAKKMHVGH).

Belongs to the class-I aminoacyl-tRNA synthetase family. In terms of assembly, monomer.

The protein resides in the cytoplasm. The catalysed reaction is tRNA(Arg) + L-arginine + ATP = L-arginyl-tRNA(Arg) + AMP + diphosphate. The protein is Arginine--tRNA ligase of Buchnera aphidicola subsp. Baizongia pistaciae (strain Bp).